The chain runs to 77 residues: Large ribosomal subunit protein bL28 (77 aa).

The tract at residues 1–20 (MSRVCQVTGKGPVTGNNISH) is disordered.

It belongs to the bacterial ribosomal protein bL28 family.

The polypeptide is Large ribosomal subunit protein bL28 (Pseudomonas fluorescens (strain SBW25)).